Consider the following 286-residue polypeptide: MDEKELIERAGGPVTRGRLVRDLEALGVGAGDTVMVHTRMSAIGYVVGGPQTVIDAVRDAVGADGTLMAYCGWNDAPPYDLAEWPPAWREAARAEWPAYDPLLSEADRGNGRVPEALRHQPGAVRSRHPDASFVAVGPAAHPLMDDHPWDDPHGPDSPLARLAGAGGRVLLLGAPLDTLTLLHHAEARAEAPGKRFVAYEQPVTVGGRRVWRRFRDVDTSRGVPYGRVVPEGVVPFTVIAQDMLAAGIGRTGRVAAAPVHLFEAADVVRFGVEWIESRMGGAAGGA.

The protein belongs to the antibiotic N-acetyltransferase family.

It catalyses the reaction a 2-deoxystreptamine antibiotic + acetyl-CoA = an N(3)-acetyl-2-deoxystreptamine antibiotic + CoA + H(+). In terms of biological role, resistance to neomycin. The sequence is that of Aminoglycoside N(3)-acetyltransferase VIII (aacC8) from Streptomyces fradiae (Streptomyces roseoflavus).